We begin with the raw amino-acid sequence, 304 residues long: N-carbamoyl-D-amino acid hydrolase (304 aa).

One can recognise a CN hydrolase domain in the interval 5–276 (MILAVGQQGP…DEVITAAVCL (272 aa)). Catalysis depends on residues E47, K127, and C172.

As to quaternary structure, homotetramer.

The catalysed reaction is an N-carbamoyl-D-amino acid + H2O + 2 H(+) = a D-alpha-amino acid + NH4(+) + CO2. The activity decreases with increasing concentration of H(2)O(2). Has 68% and 43% of activity remaining upon treatment with 0.1 and 0.2 mM H(2)O(2) for 30 minutes, respectively. Inhibited significantly by 2 mM Zn(2+), Cu(2+) and Ag(+), moderately by Co(2+), Mn(2+), Sn(2+) and Mg(2+), and only slightly by Ba(2+). Slightly activated by Fe(2+) and Ca(2+). No effect on activity by metal chelators EDTA and 8-hydroxyquinoline at 2 mM or by dithiothreitol, 2-mercaptoethanol or phenylmethanesulfonyl fluoride. In terms of biological role, catalyzes the hydrolysis of N-carbamoyl-D-amino acids to the corresponding D-amino acids. Hydrolyzes aromatic and aliphatic N-carbamoyl-D-amino acids in vitro. Effectively hydrolyzes N-carbamoyl-D-p-hydroxyphenylglycine and N-carbamoyl-DL-p-hydroxyphenylglycine, and to a lesser extent N-carbamoyl-D-methionine. No activity for N-carbamoyl-L-amino acids, N-carbamoyl-beta-alanine or (RS)-alpha-ethyl-N-carbamoylphenylglycine in vitro. In Ensifer adhaerens (Sinorhizobium morelense), this protein is N-carbamoyl-D-amino acid hydrolase.